We begin with the raw amino-acid sequence, 832 residues long: Regulator of drug sensitivity 1 (832 aa).

Residues 15–42 (CLQCKKIKRKCDKLRPACSRCQQNSLQC) constitute a DNA-binding region (zn(2)-C6 fungal-type).

It is found in the nucleus. Functionally, zinc cluster transcription factor involved in resistance to cycloheximide. The sequence is that of Regulator of drug sensitivity 1 (RDS1) from Saccharomyces cerevisiae (strain ATCC 204508 / S288c) (Baker's yeast).